A 117-amino-acid chain; its full sequence is Fluoride-specific ion channel FluC 2 (117 aa).

4 helical membrane passes run 1–21 (MITI…RALI), 33–53 (IPIA…FMMG), 61–81 (MFPF…TLSS), and 94–114 (IRFV…CFYG). Residues Gly-71 and Thr-74 each coordinate Na(+).

Belongs to the fluoride channel Fluc/FEX (TC 1.A.43) family.

The protein localises to the cell membrane. The catalysed reaction is fluoride(in) = fluoride(out). Its activity is regulated as follows. Na(+) is not transported, but it plays an essential structural role and its presence is essential for fluoride channel function. Functionally, fluoride-specific ion channel. Important for reducing fluoride concentration in the cell, thus reducing its toxicity. This chain is Fluoride-specific ion channel FluC 2, found in Staphylococcus epidermidis (strain ATCC 35984 / DSM 28319 / BCRC 17069 / CCUG 31568 / BM 3577 / RP62A).